The sequence spans 409 residues: U-box domain-containing protein 28 (409 aa).

The U-box domain maps to 10–84 (TVPCFFKCPI…DHWSDSINRR (75 aa)). ARM repeat units follow at residues 178–218 (RLSN…FIAV), 219–261 (DAES…AIAS), and 263–304 (KRVK…AISS).

The catalysed reaction is S-ubiquitinyl-[E2 ubiquitin-conjugating enzyme]-L-cysteine + [acceptor protein]-L-lysine = [E2 ubiquitin-conjugating enzyme]-L-cysteine + N(6)-ubiquitinyl-[acceptor protein]-L-lysine.. Its pathway is protein modification; protein ubiquitination. Functions as an E3 ubiquitin ligase. The chain is U-box domain-containing protein 28 (PUB28) from Arabidopsis thaliana (Mouse-ear cress).